A 240-amino-acid polypeptide reads, in one-letter code: Probable transcriptional regulatory protein A2cp1_1765 (240 aa).

The protein belongs to the TACO1 family.

Its subcellular location is the cytoplasm. The polypeptide is Probable transcriptional regulatory protein A2cp1_1765 (Anaeromyxobacter dehalogenans (strain 2CP-1 / ATCC BAA-258)).